The chain runs to 72 residues: MAKDDVIEIEGKVTDTLPNAMFKVELENGAVILAHVSGKIRKNYIKILPGDRVTVELSPYDLTKGRITYRFK.

The S1-like domain occupies 1-72 (MAKDDVIEIE…TKGRITYRFK (72 aa)).

It belongs to the IF-1 family. Component of the 30S ribosomal translation pre-initiation complex which assembles on the 30S ribosome in the order IF-2 and IF-3, IF-1 and N-formylmethionyl-tRNA(fMet); mRNA recruitment can occur at any time during PIC assembly.

The protein resides in the cytoplasm. Functionally, one of the essential components for the initiation of protein synthesis. Stabilizes the binding of IF-2 and IF-3 on the 30S subunit to which N-formylmethionyl-tRNA(fMet) subsequently binds. Helps modulate mRNA selection, yielding the 30S pre-initiation complex (PIC). Upon addition of the 50S ribosomal subunit IF-1, IF-2 and IF-3 are released leaving the mature 70S translation initiation complex. This Latilactobacillus sakei subsp. sakei (strain 23K) (Lactobacillus sakei subsp. sakei) protein is Translation initiation factor IF-1.